A 467-amino-acid polypeptide reads, in one-letter code: MTEVRLRFAPSPTGYLHVGGARTALFNWLLARKQKGTFILRIEDTDVARSTQESVDAILQGMEWLGLDWDEGPYYQSDRFPVYKEFVQKLLDSGKAYKCYCTPEELEAKREQALMDGRKPKYDGTCRELAGDVPGKPHVVRFRAPHEGVTAFDDLIKGRIAFNNDELDDLIIQRSDGTPTYNFVVVIDDATMGITTVIRGDDHVNNTPRQILLYEALGYPVPHFAHVPMILGADKARLSKRHGATGVMAYRDMGYLPEALVNYLVRLGWSFGDEEIFSKEDLIEKFSIEQVGRSAGVFNPDKLLWLNAHYIKTGDPSRLAGLLVPFLRERGVDPTGGPDLVAVVKTLQERSRTLLEMADGALFYFRRDFSYDEKAVEKFLTPEVSPLYELLIAKFASSADFTHQSIEQIFKEICEEKGLKLGQVAQPARIALCGGTVAPSIFEVMEVLGKEETNLRLEKALAFVRRG.

The 'HIGH' region motif lies at 10–20 (PSPTGYLHVGG). Residues C99, C101, C126, and E128 each contribute to the Zn(2+) site. Residues 237 to 241 (RLSKR) carry the 'KMSKS' region motif. K240 contributes to the ATP binding site.

The protein belongs to the class-I aminoacyl-tRNA synthetase family. Glutamate--tRNA ligase type 1 subfamily. Monomer. Zn(2+) serves as cofactor.

The protein localises to the cytoplasm. It catalyses the reaction tRNA(Glu) + L-glutamate + ATP = L-glutamyl-tRNA(Glu) + AMP + diphosphate. Functionally, catalyzes the attachment of glutamate to tRNA(Glu) in a two-step reaction: glutamate is first activated by ATP to form Glu-AMP and then transferred to the acceptor end of tRNA(Glu). This chain is Glutamate--tRNA ligase, found in Geotalea uraniireducens (strain Rf4) (Geobacter uraniireducens).